A 400-amino-acid polypeptide reads, in one-letter code: MDKSLFEQARPILEQIQDNGFEAYYVGGSVRDYVMGRNIHDIDITTSATPDEIESIFSHTIPVGKEHGTINVVFNDENYEVTTFRAEEDYVDHRRPSGVTFVRDLYEDLQRRDFTMNAIAMDTAYKLYDYFDGQQDINNRIIRTVGIAEERFQEDALRMIRCLRFQSQLSFDIAMETFEAMRTQMADIKFLSIERIVIELTKLMRGINVEESFNHLKSLKAFNYMPYFEQLDMNQINVTEPIDLELLIAIVSVKFDINYSLKPLKLSNRQVKDINQYIQIMNALPSIITKEQLKMFVYDYDTNLIKNVMVAADVLKANDIQGHEPLIVNLQTIDETLHRLPMHNRKDMMVNGGVLMAHLNAKSGPWLKDVLRQIEIAIVTGKVSNEETEILKWVDNHVKI.

2 residues coordinate ATP: Gly28 and Arg31. 2 residues coordinate CTP: Gly28 and Arg31. Residues Asp41 and Asp43 each coordinate Mg(2+). The ATP site is built by Arg112, Asp155, Arg158, Arg161, and Arg164. Positions 112, 155, 158, 161, and 164 each coordinate CTP.

The protein belongs to the tRNA nucleotidyltransferase/poly(A) polymerase family. Bacterial CCA-adding enzyme type 3 subfamily. In terms of assembly, homodimer. Mg(2+) is required as a cofactor.

The enzyme catalyses a tRNA precursor + 2 CTP + ATP = a tRNA with a 3' CCA end + 3 diphosphate. It catalyses the reaction a tRNA with a 3' CCA end + 2 CTP + ATP = a tRNA with a 3' CCACCA end + 3 diphosphate. In terms of biological role, catalyzes the addition and repair of the essential 3'-terminal CCA sequence in tRNAs without using a nucleic acid template. Adds these three nucleotides in the order of C, C, and A to the tRNA nucleotide-73, using CTP and ATP as substrates and producing inorganic pyrophosphate. tRNA 3'-terminal CCA addition is required both for tRNA processing and repair. Also involved in tRNA surveillance by mediating tandem CCA addition to generate a CCACCA at the 3' terminus of unstable tRNAs. While stable tRNAs receive only 3'-terminal CCA, unstable tRNAs are marked with CCACCA and rapidly degraded. This Staphylococcus aureus (strain Mu3 / ATCC 700698) protein is CCA-adding enzyme.